Reading from the N-terminus, the 289-residue chain is Formamidopyrimidine-DNA glycosylase 1 (289 aa).

The active-site Schiff-base intermediate with DNA is Pro2. Glu3 acts as the Proton donor in catalysis. The Proton donor; for beta-elimination activity role is filled by Lys61. Residues His100, Arg119, and Lys165 each contribute to the DNA site. The FPG-type zinc-finger motif lies at 251–285 (DAYGREGENCRRCGAVIRRERFMNRSSFYCPRCQP). Arg275 serves as the catalytic Proton donor; for delta-elimination activity.

Belongs to the FPG family. Monomer. Requires Zn(2+) as cofactor.

It catalyses the reaction Hydrolysis of DNA containing ring-opened 7-methylguanine residues, releasing 2,6-diamino-4-hydroxy-5-(N-methyl)formamidopyrimidine.. The enzyme catalyses 2'-deoxyribonucleotide-(2'-deoxyribose 5'-phosphate)-2'-deoxyribonucleotide-DNA = a 3'-end 2'-deoxyribonucleotide-(2,3-dehydro-2,3-deoxyribose 5'-phosphate)-DNA + a 5'-end 5'-phospho-2'-deoxyribonucleoside-DNA + H(+). Involved in base excision repair of DNA damaged by oxidation or by mutagenic agents. Acts as a DNA glycosylase that recognizes and removes damaged bases. Has a preference for oxidized purines, such as 7,8-dihydro-8-oxoguanine (8-oxoG) when paired with C, G or T, as well as methyl-faPy (formanidopyrimidine residues) in poly(dG-dC) and spiroiminodihydantoin:C base pairs. Unlike its E.coli ortholog has no activity on 8-oxoG:A. Has AP (apurinic/apyrimidinic) lyase activity and introduces nicks in the DNA strand. Cleaves the DNA backbone by beta-delta elimination to generate a single-strand break at the site of the removed base with both 3'- and 5'-phosphates. Cleaves ssDNA containing an AP site. Complements the H(2)O(2) sensitivity of an M.smegmatis fpg disruption mutant; upon expression in M.smegmatis excises 8-oxoG from dsDNA. The polypeptide is Formamidopyrimidine-DNA glycosylase 1 (fpg1) (Mycobacterium tuberculosis (strain ATCC 25618 / H37Rv)).